Here is a 359-residue protein sequence, read N- to C-terminus: Glycerol-1-phosphate dehydrogenase [NAD(P)+] (359 aa).

NAD(+) contacts are provided by residues 107–111 and 129–132; these read GRVID and TAAS. Aspartate 134 is a binding site for substrate. Serine 138 is an NAD(+) binding site. Aspartate 181 contacts substrate. 2 residues coordinate Zn(2+): aspartate 181 and histidine 261. Residue histidine 265 participates in substrate binding. Histidine 277 contributes to the Zn(2+) binding site.

This sequence belongs to the glycerol-1-phosphate dehydrogenase family. Requires Zn(2+) as cofactor.

It is found in the cytoplasm. The enzyme catalyses sn-glycerol 1-phosphate + NAD(+) = dihydroxyacetone phosphate + NADH + H(+). The catalysed reaction is sn-glycerol 1-phosphate + NADP(+) = dihydroxyacetone phosphate + NADPH + H(+). The protein operates within membrane lipid metabolism; glycerophospholipid metabolism. In terms of biological role, catalyzes the NAD(P)H-dependent reduction of dihydroxyacetonephosphate (DHAP or glycerone phosphate) to glycerol 1-phosphate (G1P). The G1P thus generated is used as the glycerophosphate backbone of phospholipids in the cellular membranes of Archaea. This is Glycerol-1-phosphate dehydrogenase [NAD(P)+] from Methanosphaerula palustris (strain ATCC BAA-1556 / DSM 19958 / E1-9c).